The following is a 230-amino-acid chain: Ureidoacrylate amidohydrolase RutB (230 aa).

D24 (proton acceptor) is an active-site residue. K133 is an active-site residue. The Nucleophile role is filled by C166.

Belongs to the isochorismatase family. RutB subfamily.

The catalysed reaction is (Z)-3-ureidoacrylate + H2O + H(+) = (Z)-3-aminoacrylate + NH4(+) + CO2. The enzyme catalyses (Z)-3-ureidoacrylate + H2O = (Z)-3-aminoacrylate + carbamate + H(+). It catalyses the reaction (Z)-2-methylureidoacrylate + H2O + H(+) = (Z)-2-methylaminoacrylate + NH4(+) + CO2. Functionally, hydrolyzes ureidoacrylate to form aminoacrylate and carbamate. The carbamate hydrolyzes spontaneously, thereby releasing one of the nitrogen atoms of the pyrimidine ring as ammonia and one of its carbon atoms as CO2. In Escherichia coli O157:H7, this protein is Ureidoacrylate amidohydrolase RutB.